We begin with the raw amino-acid sequence, 1481 residues long: DNA excision repair protein ERCC-6 (1481 aa).

The interval 1–506 (MFHEEVPNST…GFLFKKLFKY (506 aa)) is N-terminal domain; essential for its chromatin remodeling activity. Ser158 is subject to Phosphoserine; by CDK2. Position 170 is an N6-methylated lysine; by EHMT2 (Lys170). Lys256 is covalently cross-linked (Glycyl lysine isopeptide (Lys-Gly) (interchain with G-Cter in SUMO2)). Lys298 is subject to N6-methylated lysine; by EHMT2. The segment at 309-452 (AIETKADQRS…RKVARRQDDG (144 aa)) is disordered. Basic residues predominate over residues 327-337 (RLKKHSRKLQR). Over residues 353-363 (KPLEPEVRPEA) the composition is skewed to basic and acidic residues. Composition is skewed to acidic residues over residues 378–390 (DGEEEEEQEEEEG) and 420–435 (EIDDDFFPSSEEEDEA). Ser428 and Ser429 each carry phosphoserine. Position 444 is an N6-methylated lysine; by EHMT2 (Lys444). Phosphoserine occurs at positions 482 and 485. One can recognise a Helicase ATP-binding domain in the interval 515–691 (WELHCQQAGG…WSLFDFIFPG (177 aa)). 528–535 (DEMGLGKT) is an ATP binding site. The short motif at 642-645 (DEGH) is the DEAH box element. One can recognise a Helicase C-terminal domain in the interval 839–998 (VVESLLKIWH…RRFFKSNDLY (160 aa)). 3 disordered regions span residues 1040–1096 (LGTD…NRAS), 1114–1238 (SVMS…DRSS), and 1307–1372 (GHRG…GAPS). Lys1047 bears the N6-methylated lysine; by EHMT2 mark. The span at 1138–1147 (ASTSEKQGSS) shows a compositional bias: polar residues. Over residues 1192 to 1201 (QPKQKAKNSK) the composition is skewed to basic residues. A compositionally biased stretch (basic and acidic residues) spans 1202 to 1212 (HCRDAKFEGTR). Positions 1330-1345 (LPVQHPSSLTEKTQNN) are enriched in polar residues. Residues 1346–1364 (MKKEGKAHTPEHFSGKEDG) are compositionally biased toward basic and acidic residues. The CSA-interacting motif (CIM) signature appears at 1373-1385 (SSSLLARMRARNH). A ubiquitin-binding domain (UBD) region spans residues 1387–1416 (ILPERLESDSEHLAEAAAVPPCGTEHDDLL). Positions 1417 to 1481 (VDMRNFIAFQ…GIWKLKPEYC (65 aa)) are winged-helix domain (WHD). The interval 1434–1481 (STQEILQEFESKLSVAQSCVFRELLRNLCNFHRTPGGEGIWKLKPEYC) is essential for its interaction with RNA polymerase II, transcription-coupled nucleotide excision repair activity, association with chromatin after UV irradiation and for mediating the UV-induced translocation of ERRC8 to the nuclear matrix.

This sequence belongs to the SNF2/RAD54 helicase family. In terms of assembly, homodimer. Binds DNA. Interacts with ERCC8. Interacts with RNA polymerase II; interaction is enhanced by UV irradiation. Component of the B-WICH complex, at least composed of SMARCA5/SNF2H, BAZ1B/WSTF, SF3B1, DEK, MYO1C, ERCC6, MYBBP1A and DDX21. Interacts with KIAA1530/UVSSA. Interacts with ELOA and CUL5; the interaction is induced by DNA damaging agents or by inhibitors of RNA polymerase II elongation. Interacts (via WHD region) with RIF1. Interacts with SMARCC2/BAF170, SMARCB1/BAF47 and the neuron-specific chromatin remodeling complex (nBAF complex). Interacts with ERCC5/XPG (via C-terminus); the interaction stimulates ERCC6/CSB binding to DNA repair bubble and ERCC6/CSB ATPase activity. May form a complex composed of RNA polymerase II, ERCC6/CSB and ERCC5/XPG which associates with the DNA repair bubble during transcription-coupled nucleotide excision repair. Interacts with CAND1, CSTF1, DDX3X, DDX5, DDX17, DDX23, DHX36, HDAC1, HNRNPU, MTA2, PRPF3, PSMD3, RBBP4, SFPQ, SMARCA1, SMARCA2, TOP1, USP7 and XRCC5. In terms of processing, phosphorylated in a cell cycle-dependent manner at Ser-158 by cyclin A-CDK2 in response to DNA damage. Phosphorylation at this site promotes the intramolecular interaction of the N-terminal domain with the helicase ATP-binding domain, thereby probably releasing the inhibitory effect of the N-terminal domain on its ATPase activity. Phosphorylation is essential for its chromatin remodeling activity. Post-translationally, ubiquitinated at the C-terminus. Ubiquitination by the CSA complex leads to ERCC6 proteasomal degradation in a UV-dependent manner. Stabilized following interaction with KIAA1530/UVSSA, which promotes recruitment of deubiquitinating enzyme USP7, leading to deubiquitination of ERCC6 thereby preventing UV-induced degradation of ERCC6 by the proteasome.

It localises to the nucleus. The protein resides in the chromosome. It catalyses the reaction ATP + H2O = ADP + phosphate + H(+). In terms of biological role, essential factor involved in transcription-coupled nucleotide excision repair (TC-NER), a process during which RNA polymerase II-blocking lesions are rapidly removed from the transcribed strand of active genes. Plays a central role in the initiation of the TC-NER process: specifically recognizes and binds RNA polymerase II stalled at a lesion, and mediates recruitment of ERCC8/CSA, initiating DNA damage excision by TFIIH recruitment. Upon DNA-binding, it locally modifies DNA conformation by wrapping the DNA around itself, thereby modifying the interface between stalled RNA polymerase II and DNA. Acts as a chromatin remodeler at DSBs; DNA-dependent ATPase-dependent activity is essential for this function. Plays an important role in regulating the choice of the DNA double-strand breaks (DSBs) repair pathway and G2/M checkpoint activation; DNA-dependent ATPase activity is essential for this function. Regulates the DNA repair pathway choice by inhibiting non-homologous end joining (NHEJ), thereby promoting the homologous recombination (HR)-mediated repair of DSBs during the S/G2 phases of the cell cycle. Mediates the activation of the ATM- and CHEK2-dependent DNA damage responses thus preventing premature entry of cells into mitosis following the induction of DNA DSBs. Remodels chromatin by evicting histones from chromatin flanking DSBs, limiting RIF1 accumulation at DSBs thereby promoting BRCA1-mediated HR. Required for stable recruitment of ELOA and CUL5 to DNA damage sites. Also involved in UV-induced translocation of ERCC8 to the nuclear matrix. Essential for neuronal differentiation and neuritogenesis; regulates transcription and chromatin remodeling activities required during neurogenesis. The polypeptide is DNA excision repair protein ERCC-6 (Ercc6) (Mus musculus (Mouse)).